A 160-amino-acid chain; its full sequence is AP-1 complex subunit sigma-2 (160 aa).

Belongs to the adaptor complexes small subunit family. As to quaternary structure, adaptor protein complex 1 (AP-1) is a heterotetramer composed of two large adaptins (gamma-type subunit AP1G1 and beta-type subunit AP1B1), a medium adaptin (mu-type subunit AP1M1 or AP1M2) and a small adaptin (sigma-type subunit AP1S1 or AP1S2 or AP1S3). Binds to MUC1. Widely expressed.

The protein localises to the golgi apparatus. It is found in the cytoplasmic vesicle membrane. It localises to the membrane. Its subcellular location is the clathrin-coated pit. Subunit of clathrin-associated adaptor protein complex 1 that plays a role in protein sorting in the late-Golgi/trans-Golgi network (TGN) and/or endosomes. The AP complexes mediate both the recruitment of clathrin to membranes and the recognition of sorting signals within the cytosolic tails of transmembrane cargo molecules. This Mus musculus (Mouse) protein is AP-1 complex subunit sigma-2 (Ap1s2).